Reading from the N-terminus, the 188-residue chain is MFDIGWSELVVIGVVALVAIGPKELPGVLRMVGQWMGKARKLASEFQGQFQEAMREAEMADLKKSFDEVKEATAGLSTNNMLTKLGSELSEAAAIDKSALDSPPVEPTTPAPPTPETFIEATTHQAVTGEPLAIVSEAQAAGAHTTLPVPAETHALATTDLAPPDLAHPAPAHPEPTNSEPAKDAKAS.

Residues 1 to 21 (MFDIGWSELVVIGVVALVAIG) form a helical membrane-spanning segment. Residues 147–188 (LPVPAETHALATTDLAPPDLAHPAPAHPEPTNSEPAKDAKAS) are disordered. Over residues 160-170 (DLAPPDLAHPA) the composition is skewed to low complexity.

The protein belongs to the TatB family. As to quaternary structure, the Tat system comprises two distinct complexes: a TatABC complex, containing multiple copies of TatA, TatB and TatC subunits, and a separate TatA complex, containing only TatA subunits. Substrates initially bind to the TatABC complex, which probably triggers association of the separate TatA complex to form the active translocon.

It localises to the cell inner membrane. Functionally, part of the twin-arginine translocation (Tat) system that transports large folded proteins containing a characteristic twin-arginine motif in their signal peptide across membranes. Together with TatC, TatB is part of a receptor directly interacting with Tat signal peptides. TatB may form an oligomeric binding site that transiently accommodates folded Tat precursor proteins before their translocation. The protein is Sec-independent protein translocase protein TatB of Rhodopseudomonas palustris (strain HaA2).